The sequence spans 383 residues: Histidinol-phosphate aminotransferase (383 aa).

At Lys240 the chain carries N6-(pyridoxal phosphate)lysine.

It belongs to the class-II pyridoxal-phosphate-dependent aminotransferase family. Histidinol-phosphate aminotransferase subfamily. In terms of assembly, homodimer. Requires pyridoxal 5'-phosphate as cofactor.

It catalyses the reaction L-histidinol phosphate + 2-oxoglutarate = 3-(imidazol-4-yl)-2-oxopropyl phosphate + L-glutamate. Its pathway is amino-acid biosynthesis; L-histidine biosynthesis; L-histidine from 5-phospho-alpha-D-ribose 1-diphosphate: step 7/9. The chain is Histidinol-phosphate aminotransferase from Oleidesulfovibrio alaskensis (strain ATCC BAA-1058 / DSM 17464 / G20) (Desulfovibrio alaskensis).